We begin with the raw amino-acid sequence, 469 residues long: Mitochondrial-processing peptidase subunit beta (469 aa).

Histidine 78 lines the Zn(2+) pocket. The Proton acceptor role is filled by glutamate 81. Zn(2+)-binding residues include histidine 82 and glutamate 159.

The protein belongs to the peptidase M16 family. In terms of assembly, heterodimer of alpha and beta subunits, forming the mitochondrial processing protease (MPP) in which subunit alpha is involved in substrate recognition and binding and subunit beta is the catalytic subunit. mppB is probably also part of the cytochrome bc1 complex as a core I protein in the mitochondrial inner membrane. Requires Zn(2+) as cofactor.

The protein resides in the mitochondrion inner membrane. The protein localises to the mitochondrion matrix. It catalyses the reaction Release of N-terminal transit peptides from precursor proteins imported into the mitochondrion, typically with Arg in position P2.. Its activity is regulated as follows. Binding to alpha subunit is required for catalytic activity. Catalytic subunit of the essential mitochondrial processing protease (MPP), which cleaves the mitochondrial sequence off newly imported precursors proteins. Preferentially, cleaves after an arginine at position P2. Plays an essential role in mitochondrial biogenesis. In Dictyostelium discoideum (Social amoeba), this protein is Mitochondrial-processing peptidase subunit beta (mppB).